The following is a 440-amino-acid chain: MSYFEHIPEIRYEGPQSDNPLAYRHYDKSKKVLGKTLEEHLRIAVCYWHTFVWPGVDIFGQGTFRRPWQQAGDAMERARQKADSAFEFFSKLGTPYYTFHDTDVSPEGSSLKEYSENFLRITDYLARKQEDTGIKLLWGTANLFSHPRYAAGAATSPDPEVFAFAATQVRHALDATQRLGGDNYVLWGGREGYDTLLNTDLMRERDQLARFLHMVVDHAHKIGFKGSLLIEPKPQEPTKHQYDYDVATVHGFLLQHGLEKEIRVNIEANHATLAGHSFHHEIATAYALGIFGSVDANRGDPQNGWDTDQFPNSVEELTLAFYEILKHGGFTTGGMNFDSKVRRQSVDPEDLFYGHIGAIDNLALAVERAAVLIENDRLDQFKRQRYAGWDADFGRKILSGDYSLSTLATDALARGLNPQHASGHQELMENIVNQAIYSGR.

Catalysis depends on residues histidine 100 and aspartate 103. Mg(2+) contacts are provided by glutamate 231, glutamate 267, histidine 270, aspartate 295, aspartate 306, aspartate 308, and aspartate 338.

The protein belongs to the xylose isomerase family. In terms of assembly, homotetramer. It depends on Mg(2+) as a cofactor.

It localises to the cytoplasm. The catalysed reaction is alpha-D-xylose = alpha-D-xylulofuranose. The chain is Xylose isomerase from Paraburkholderia xenovorans (strain LB400).